The chain runs to 79 residues: Short neurotoxin 2 (79 aa).

Residues M1–T21 form the signal peptide. Intrachain disulfides connect C24–C41, C34–C59, C63–C71, and C72–C77.

Belongs to the three-finger toxin family. Short-chain subfamily. Type III alpha-neurotoxin sub-subfamily. Expressed by the venom gland.

It is found in the secreted. Binds with high affinity to muscle nicotinic acetylcholine receptor (nAChR) and hinders acetylcholine binding to the receptor, thereby impairing neuromuscular transmission. Competes with the binding of alpha-bungarotoxin on muscle AChR (from Torpedo) with an IC(50) of 0.30 uM. Causes muscle paralysis, spasms and increased respiration. This is Short neurotoxin 2 from Pseudonaja textilis (Eastern brown snake).